The sequence spans 248 residues: Ribosomal RNA small subunit methyltransferase G (248 aa).

The disordered stretch occupies residues 1 to 23; sequence MFHVKHVGPVEPAAGDPEVPPVA. S-adenosyl-L-methionine is bound by residues Gly-93, Leu-98, 143 to 144, and Arg-161; that span reads AE. Residues 226–248 are disordered; it reads VVSARRAKPPHPKSARTGKAGTR. Basic residues predominate over residues 230–248; sequence RRAKPPHPKSARTGKAGTR.

The protein belongs to the methyltransferase superfamily. RNA methyltransferase RsmG family.

The protein localises to the cytoplasm. Its function is as follows. Specifically methylates the N7 position of guanine in position 518 of 16S rRNA. The sequence is that of Ribosomal RNA small subunit methyltransferase G from Mycolicibacterium paratuberculosis (strain ATCC BAA-968 / K-10) (Mycobacterium paratuberculosis).